A 227-amino-acid chain; its full sequence is uncharacterized protein (227 aa).

The next 2 membrane-spanning stretches (helical) occupy residues 12-32 (IVLF…YLYA) and 80-100 (IILI…KIPL).

It localises to the cell membrane. This is an uncharacterized protein from Methanocaldococcus jannaschii (strain ATCC 43067 / DSM 2661 / JAL-1 / JCM 10045 / NBRC 100440) (Methanococcus jannaschii).